Reading from the N-terminus, the 170-residue chain is NADH-quinone oxidoreductase subunit B (170 aa).

[4Fe-4S] cluster contacts are provided by Cys-42, Cys-43, Cys-107, and Cys-136.

Belongs to the complex I 20 kDa subunit family. In terms of assembly, NDH-1 is composed of 14 different subunits. Subunits NuoB, C, D, E, F, and G constitute the peripheral sector of the complex. [4Fe-4S] cluster is required as a cofactor.

The protein resides in the cell inner membrane. The enzyme catalyses a quinone + NADH + 5 H(+)(in) = a quinol + NAD(+) + 4 H(+)(out). Its function is as follows. NDH-1 shuttles electrons from NADH, via FMN and iron-sulfur (Fe-S) centers, to quinones in the respiratory chain. The immediate electron acceptor for the enzyme in this species is believed to be ubiquinone. Couples the redox reaction to proton translocation (for every two electrons transferred, four hydrogen ions are translocated across the cytoplasmic membrane), and thus conserves the redox energy in a proton gradient. This is NADH-quinone oxidoreductase subunit B from Campylobacter curvus (strain 525.92).